Consider the following 72-residue polypeptide: MSKAVIVIPARYGSSRLPGKPLLDIVGKPMIQHVYERALQVAGVAEVWVATDDQRVEKAVQAFGGKAIMTRN.

Belongs to the KdsB family. In terms of assembly, homodimer.

It localises to the cytoplasm. It carries out the reaction 3-deoxy-alpha-D-manno-oct-2-ulosonate + CTP = CMP-3-deoxy-beta-D-manno-octulosonate + diphosphate. It participates in nucleotide-sugar biosynthesis; CMP-3-deoxy-D-manno-octulosonate biosynthesis; CMP-3-deoxy-D-manno-octulosonate from 3-deoxy-D-manno-octulosonate and CTP: step 1/1. Its pathway is bacterial outer membrane biogenesis; lipopolysaccharide biosynthesis. Activates KDO (a required 8-carbon sugar) for incorporation into bacterial lipopolysaccharide in Gram-negative bacteria. The polypeptide is 3-deoxy-manno-octulosonate cytidylyltransferase (kpsU) (Escherichia coli).